Reading from the N-terminus, the 288-residue chain is Hemin import ATP-binding protein HmuV (288 aa).

The 239-residue stretch at 31–269 folds into the ABC transporter domain; the sequence is LRARGLVVER…DLLTRVYQHP (239 aa). 68 to 75 lines the ATP pocket; the sequence is GPNGAGKS.

It belongs to the ABC transporter superfamily. Heme (hemin) importer (TC 3.A.1.14.5) family. In terms of assembly, the complex is composed of two ATP-binding proteins (HmuV), two transmembrane proteins (HmuU) and a solute-binding protein (HmuT).

It localises to the cell membrane. In terms of biological role, part of the ABC transporter complex HmuTUV involved in hemin import. Responsible for energy coupling to the transport system. The polypeptide is Hemin import ATP-binding protein HmuV (Nocardia farcinica (strain IFM 10152)).